The following is a 217-amino-acid chain: Putative 8-oxo-dGTP diphosphatase 3 (217 aa).

The Nudix hydrolase domain maps to 30-164 (GRYGAAGLLL…PGFAASWQRL (135 aa)). The disordered stretch occupies residues 67–92 (LPGGARDSHETPEQTAVRESSEEAGL). Mg(2+) contacts are provided by glycine 70, glutamate 85, glutamate 88, and glutamate 89. The Nudix box signature appears at 70–91 (GARDSHETPEQTAVRESSEEAG).

This sequence belongs to the Nudix hydrolase family. Requires Mg(2+) as cofactor. The cofactor is Mn(2+).

It carries out the reaction 8-oxo-dGTP + H2O = 8-oxo-dGMP + diphosphate + H(+). Functionally, may be involved in the GO system responsible for removing an oxidatively damaged form of guanine (7,8-dihydro-8-oxoguanine, 8-oxo-dGTP) from DNA and the nucleotide pool. 8-oxo-dGTP is inserted opposite dA and dC residues of template DNA with almost equal efficiency thus leading to A.T to G.C transversions. MutT specifically degrades 8-oxo-dGTP to the monophosphate. The polypeptide is Putative 8-oxo-dGTP diphosphatase 3 (mutT3) (Mycobacterium tuberculosis (strain CDC 1551 / Oshkosh)).